A 224-amino-acid chain; its full sequence is tRNA (guanine-N(7)-)-methyltransferase (224 aa).

Positions 45, 70, 97, and 119 each coordinate S-adenosyl-L-methionine. Aspartate 119 is a catalytic residue. Residues lysine 123, aspartate 155, and 199 to 202 (TEYE) contribute to the substrate site.

Belongs to the class I-like SAM-binding methyltransferase superfamily. TrmB family.

The enzyme catalyses guanosine(46) in tRNA + S-adenosyl-L-methionine = N(7)-methylguanosine(46) in tRNA + S-adenosyl-L-homocysteine. The protein operates within tRNA modification; N(7)-methylguanine-tRNA biosynthesis. Its function is as follows. Catalyzes the formation of N(7)-methylguanine at position 46 (m7G46) in tRNA. The protein is tRNA (guanine-N(7)-)-methyltransferase of Ureaplasma urealyticum serovar 10 (strain ATCC 33699 / Western).